The following is a 311-amino-acid chain: Olfactory receptor 8B8 (311 aa).

The Extracellular segment spans residues 1–25 (MAAENSSFVTQFILAGLTDQPGVQI). The N-linked (GlcNAc...) asparagine glycan is linked to Asn5. Residues 26-46 (PLFFLFLGFYVVTVVGNLGLI) form a helical membrane-spanning segment. At 47-54 (TLIRLNSH) the chain is on the cytoplasmic side. The helical transmembrane segment at 55–75 (LHTPMYFFLYNLSFIDFCYSS) threads the bilayer. Residues 76–99 (VITPKMLMSFVLKKNSISYAGCMT) are Extracellular-facing. Residues Cys97 and Cys189 are joined by a disulfide bond. The helical transmembrane segment at 100–120 (QLFFFLFFVVSESFILSAMAY) threads the bilayer. Over 121–139 (DRYVAICNPLLYMVTMSPQ) the chain is Cytoplasmic. Residues 140–160 (VCFLLLLGVYGMGFAGAMAHT) form a helical membrane-spanning segment. Over 161 to 197 (ACMMGVTFCANNLVNHYMCDILPLLECACTSTYVNEL) the chain is Extracellular. A helical membrane pass occupies residues 198 to 217 (VVFVVVGIDIGVPTVTIFIS). The Cytoplasmic segment spans residues 218 to 237 (YALILSSIFHIDSTEGRSKA). Residues 238-258 (FSTCSSHIIAVSLFFGSGAFM) form a helical membrane-spanning segment. Over 259 to 271 (YLKPFSLLAMNQG) the chain is Extracellular. The chain crosses the membrane as a helical span at residues 272–292 (KVSSLFYTTVVPMLNPLIYSL). Over 293-311 (RNKDVKVALKKILNKNAFS) the chain is Cytoplasmic.

It belongs to the G-protein coupled receptor 1 family. Expressed in the tongue and testis.

The protein resides in the cell membrane. Functionally, odorant receptor (Potential). May be involved in taste perception. In Homo sapiens (Human), this protein is Olfactory receptor 8B8.